We begin with the raw amino-acid sequence, 283 residues long: Thymidylate synthase (283 aa).

Residue arginine 22 coordinates dUMP. The active-site Nucleophile is the cysteine 160. Residues 180 to 183, asparagine 191, and 221 to 223 contribute to the dUMP site; these read RSCD and HIY. Aspartate 183 is a binding site for (6R)-5,10-methylene-5,6,7,8-tetrahydrofolate. Residue serine 282 coordinates (6R)-5,10-methylene-5,6,7,8-tetrahydrofolate.

This sequence belongs to the thymidylate synthase family. Bacterial-type ThyA subfamily. In terms of assembly, homodimer.

It is found in the cytoplasm. It carries out the reaction dUMP + (6R)-5,10-methylene-5,6,7,8-tetrahydrofolate = 7,8-dihydrofolate + dTMP. Its pathway is pyrimidine metabolism; dTTP biosynthesis. In terms of biological role, catalyzes the reductive methylation of 2'-deoxyuridine-5'-monophosphate (dUMP) to 2'-deoxythymidine-5'-monophosphate (dTMP) while utilizing 5,10-methylenetetrahydrofolate (mTHF) as the methyl donor and reductant in the reaction, yielding dihydrofolate (DHF) as a by-product. This enzymatic reaction provides an intracellular de novo source of dTMP, an essential precursor for DNA biosynthesis. This Mannheimia succiniciproducens (strain KCTC 0769BP / MBEL55E) protein is Thymidylate synthase.